Reading from the N-terminus, the 259-residue chain is Protoheme IX farnesyltransferase (259 aa).

The next 8 membrane-spanning stretches (helical) occupy residues 15 to 35 (LICLTALLLAAAAAAMINGVL), 61 to 81 (ATVAAAGMLFAALALSITFLP), 83 to 103 (LTTALILLAIFSYTPLYTLWF), 109 to 129 (WGVVPGGIPGALPVLVGASAV), 137 to 157 (PLILFLVMLLWQPPHFWALAL), 182 to 202 (VCIFVFAALLLPASLALWFTG), 208 to 228 (FAIEALCLGFFNLFSCYLYLV), and 236 to 256 (AFQASIFYLLGLLSAVIIDIC).

Belongs to the UbiA prenyltransferase family. Protoheme IX farnesyltransferase subfamily.

Its subcellular location is the cell inner membrane. The enzyme catalyses heme b + (2E,6E)-farnesyl diphosphate + H2O = Fe(II)-heme o + diphosphate. It participates in porphyrin-containing compound metabolism; heme O biosynthesis; heme O from protoheme: step 1/1. Converts heme B (protoheme IX) to heme O by substitution of the vinyl group on carbon 2 of heme B porphyrin ring with a hydroxyethyl farnesyl side group. This chain is Protoheme IX farnesyltransferase, found in Geotalea uraniireducens (strain Rf4) (Geobacter uraniireducens).